A 93-amino-acid polypeptide reads, in one-letter code: Antitoxin EndoAI (93 aa).

This sequence belongs to the MazE/EndoAI family. In terms of assembly, homodimer, forms a heterohexamer composed of alternating toxin and antitoxin homodimers which inhibits the toxin's endoribonuclease activity. Antitoxin prevents RNA binding to the endoribonuclease.

In terms of biological role, antitoxin component of a type II toxin-antitoxin (TA) system. Antitoxin that directly inhibits activity of EndoA in vitro. Upon expression in E.coli counteracts inhibitory effect of endoribonuclease EndoA. The EndoA-EndoAI complex does not seem to bind its own promoter. This is Antitoxin EndoAI from Bacillus subtilis (strain 168).